Consider the following 246-residue polypeptide: Adenosylcobinamide-GDP ribazoletransferase (246 aa).

The next 6 membrane-spanning stretches (helical) occupy residues 34-54 (IVTFPLVGLLLGAIAGAVALL), 59-79 (CGVPLAALFGVLALALLTGGF), 113-133 (GGLALIFVLVAKVLVVGELLL), 136-156 (IHPIAALAAACAVGRGMAALL), 181-201 (TLVTMAMAIALATALLGLQGL), and 203-223 (AALITLVLIWGLGWALKRTLG).

The protein belongs to the CobS family. Mg(2+) serves as cofactor.

It is found in the cell inner membrane. The enzyme catalyses alpha-ribazole + adenosylcob(III)inamide-GDP = adenosylcob(III)alamin + GMP + H(+). It carries out the reaction alpha-ribazole 5'-phosphate + adenosylcob(III)inamide-GDP = adenosylcob(III)alamin 5'-phosphate + GMP + H(+). It participates in cofactor biosynthesis; adenosylcobalamin biosynthesis; adenosylcobalamin from cob(II)yrinate a,c-diamide: step 7/7. Joins adenosylcobinamide-GDP and alpha-ribazole to generate adenosylcobalamin (Ado-cobalamin). Also synthesizes adenosylcobalamin 5'-phosphate from adenosylcobinamide-GDP and alpha-ribazole 5'-phosphate. This is Adenosylcobinamide-GDP ribazoletransferase from Klebsiella pneumoniae subsp. pneumoniae (strain ATCC 700721 / MGH 78578).